We begin with the raw amino-acid sequence, 168 residues long: Transmembrane protein 229b (168 aa).

At 1-14 (MAPPEPLTALSRWY) the chain is on the cytoplasmic side. A helical membrane pass occupies residues 15–35 (LYAIHGYFCEVMFTAAWDFVV). The Extracellular segment spans residues 36–40 (NYNWK). The chain crosses the membrane as a helical span at residues 41–61 (FPGVTSVWALFIYGTSILIVE). At 62-72 (KMYLYLKDKCN) the chain is on the cytoplasmic side. The helical transmembrane segment at 73–93 (ILIRCLIYTLWTYIWEFSTGL) threads the bilayer. At 94-109 (ILRQFNACPWDYSQFD) the chain is on the extracellular side. Residues 110 to 130 (FDFMGLITLEYAIPWFCASFI) form a helical membrane-spanning segment. The Cytoplasmic segment spans residues 131–168 (MEQLVIRNTLRLRFDEHAEPGSPVMSTVSMANGHVKCN).

The protein belongs to the TMEM229 family.

It is found in the membrane. This is Transmembrane protein 229b (tmem229b) from Xenopus tropicalis (Western clawed frog).